The sequence spans 364 residues: Trans-enoyl reductase ccsC (364 aa).

52-55 (CDYK) lines the NADP(+) pocket. Position 141-148 (141-148 (TGLATLGM)) interacts with substrate. NADP(+) contacts are provided by residues 176–179 (SSSV), 199–202 (SPRN), tyrosine 217, and 264–265 (LE). 284–288 (GPALL) contributes to the substrate binding site. 353–354 (VS) is a binding site for NADP(+).

Belongs to the zinc-containing alcohol dehydrogenase family. In terms of assembly, monomer.

Its pathway is mycotoxin biosynthesis. Trans-enoyl reductase; part of the gene cluster that mediates the biosynthesis of a family of the mycotoxins cytochalasins E and K. The hybrid PKS-NRPS synthetase ccsA and the enoyl reductase ccsC are responsible for fusion of phenylalanine with an octaketide backbone and subsequent release of the stable tetramic acid precursor. The polyketide synthase module (PKS) of the PKS-NRPS ccsA is responsible for the synthesis of the octaketide backbone. The downstream nonribosomal peptide synthetase (NRPS) amidates the carboxyl end of the octaketide with a phenylalanine. A reductase-like domain (R) at the C-terminus catalyzes the reductive release of the polyketide-amino acid intermediate. Because ccsA lacks a designated enoylreductase (ER) domain, the required activity is provided the enoyl reductase ccsC. Upon formation of the 11-membered carbocycle-fused perhydroisoindolone intermediate, a number of oxidative steps are required to afford the final cytochalasin E and K, including two hydroxylations at C17 and C18, one alcohol oxidation at C17, one epoxidation at C6 and C7 and two Baeyer-Villiger oxidations. The oxidative modification at C17, C18 and the C6-C7 epoxidation are likely to be catalyzed by the two cytochrome P450 oxygenases ccsD and ccsG. CcsD may be responsible for the epoxidation of the C6-C7 double bond. CcsG may be responsible for the successive oxidative modifications at C17 and C18. The double Baeyer-Villiger oxidations of ketocytochalasin to precytochalasin and cytochalasin Z(16) are among the final steps leading to cytochalasin E and K and are catalyzed by ccsB. The first oxygen insertion step follows that of the classic BVMO mechanism, generating the ester precytochalasin. Release of precytochalasin into an aqueous environment can generate the shunt product iso-precytochalasin through spontaneous isomerization. Alternatively, precytochalasin can undergo further oxidation by ccsB to yield the in-line carbonate-containing cytochalasin Z(16). Cytochalasin Z(16) is a precursor to cytochalasin E and cytochalasin K, whereas iso-precytochalasin is a precursor to cytochalasin Z(17) and rosellichalasin. The hydrolyase ccsE may catalyze hydrolysis of epoxide bond in cytochalasin E to afford cytochalasin K. The function of ccsF has not been assigned but it may play a role in post-PKS-NRPS biosynthetic step, resistance or transport of cytochalasins and related PKS-NRPS products. The protein is Trans-enoyl reductase ccsC of Aspergillus clavatus (strain ATCC 1007 / CBS 513.65 / DSM 816 / NCTC 3887 / NRRL 1 / QM 1276 / 107).